We begin with the raw amino-acid sequence, 668 residues long: Probable potassium transport system protein Kup (668 aa).

Helical transmembrane passes span 17 to 37, 59 to 79, 104 to 124, 148 to 168, 175 to 195, 221 to 241, 256 to 276, 299 to 319, 350 to 370, 380 to 400, 403 to 423, and 430 to 450; these read GILVAMGVVYGDIGTSPLYVM, VSLIFWTLTILTTIKYVVIAL, IIPAMIGGAALLADGVLTPAV, TIIVVITLTIILILFSVQRFG, AFGPIMFLWFTFLGIIGLMNF, LGLFILGNIFLATTGAEALYS, PYIKICLILNYLGQAAWLLTV, ILVFGVVFATIAAVIASQALI, MYIPAVNLILWLACSAIVLAF, YGLSITITMLMTTILLLFYLL, IPAWSAYLISLFFAAIEVVFF, and FFHGGYVAVGMAVFLLCIMII.

The protein belongs to the HAK/KUP transporter (TC 2.A.72) family.

The protein localises to the cell membrane. It carries out the reaction K(+)(in) + H(+)(in) = K(+)(out) + H(+)(out). Transport of potassium into the cell. Likely operates as a K(+):H(+) symporter. In Enterococcus faecalis (strain ATCC 700802 / V583), this protein is Probable potassium transport system protein Kup.